A 335-amino-acid chain; its full sequence is MASPRWFWSVCAIAAVALLLVSKVPSASAQRKKEMVLSEKVSQLMEWANKRPVIRMNGDKFRRLVKAPPRNYSVVVMFTALQLHRQCVVCKQADEEFQILANSWRYSNAFTNRIFFAMVDFDEGSDVFQMLNMNSAPTFINFPPKGKPKRADTYELQVRGFSAEQIARWIADRTDVNIRVIRPPNYAGPLMLGLLLAVIGGLVYLRRSNMEFLFNKTGWAFAALCFVLAMTSGQMWNHIRGPPYAHKNPHTGHVNYIHGSSQAQFVAETHIVLLFNGGVTLGMVLLCEAATSDMDIGKRRMMCIAGIGLVVLFFSWMLSIFRSKYHGYPYSFLMS.

An N-terminal signal peptide occupies residues 1–29 (MASPRWFWSVCAIAAVALLLVSKVPSASA). The Extracellular portion of the chain corresponds to 30–184 (QRKKEMVLSE…DVNIRVIRPP (155 aa)). The region spanning 47–175 (WANKRPVIRM…IARWIADRTD (129 aa)) is the Thioredoxin domain. Asn71 is a glycosylation site (N-linked (GlcNAc...) asparagine). A disulfide bond links Cys87 and Cys90. A helical membrane pass occupies residues 185–205 (NYAGPLMLGLLLAVIGGLVYL). The Cytoplasmic portion of the chain corresponds to 206-209 (RRSN). Residues 210 to 230 (MEFLFNKTGWAFAALCFVLAM) form a helical membrane-spanning segment. Residues 231–270 (TSGQMWNHIRGPPYAHKNPHTGHVNYIHGSSQAQFVAETH) lie on the Extracellular side of the membrane. A helical membrane pass occupies residues 271-291 (IVLLFNGGVTLGMVLLCEAAT). The Cytoplasmic portion of the chain corresponds to 292–300 (SDMDIGKRR). A helical membrane pass occupies residues 301–321 (MMCIAGIGLVVLFFSWMLSIF). Residues 322 to 335 (RSKYHGYPYSFLMS) are Extracellular-facing.

The protein belongs to the OST3/OST6 family. Accessory component of the STT3B-containing form of the oligosaccharyltransferase (OST) complex. OST exists in two different complex forms which contain common core subunits RPN1, RPN2, OST48, OST4, DAD1 and TMEM258, either STT3A or STT3B as catalytic subunits, and form-specific accessory subunits. OST can form stable complexes with the Sec61 complex or with both the Sec61 and TRAP complexes. The association of TUSC3 or MAGT1 with the STT3B-containing complex seems to be mutually exclusvice. Expressed at high levels in kidney, colon, heart and liver. Expressed at lower levels in intestine, spleen, brain and lung.

The protein localises to the cell membrane. It is found in the endoplasmic reticulum. It localises to the endoplasmic reticulum membrane. The protein operates within protein modification; protein glycosylation. Accessory component of the STT3B-containing form of the N-oligosaccharyl transferase (OST) complex which catalyzes the transfer of a high mannose oligosaccharide from a lipid-linked oligosaccharide donor to an asparagine residue within an Asn-X-Ser/Thr consensus motif in nascent polypeptide chains. Involved in N-glycosylation of STT3B-dependent substrates. Specifically required for the glycosylation of a subset of acceptor sites that are near cysteine residues; in this function seems to act redundantly with TUSC3. In its oxidized form proposed to form transient mixed disulfides with a glycoprotein substrate to facilitate access of STT3B to the unmodified acceptor site. Also has oxidoreductase-independent functions in the STT3B-containing OST complex possibly involving substrate recognition. Could indirectly play a role in Mg(2+) transport in epithelial cells. The sequence is that of Dolichyl-diphosphooligosaccharide--protein glycosyltransferase subunit MAGT1 from Mus musculus (Mouse).